The sequence spans 316 residues: BRCA2 and CDKN1A-interacting protein (316 aa).

Positions 1–57 are disordered; it reads MASKAKKRAVGNGIQRPLGAPGQREEEEEEEDEVEDEEEDEDDSDEEEDEVDEIVDE. Positions 25-57 are enriched in acidic residues; the sequence is EEEEEEEDEVEDEEEDEDDSDEEEDEVDEIVDE. Residues Ser-44 and Ser-114 each carry the phosphoserine modification. The interaction with BRCA2 stretch occupies residues 61-169; sequence IEFEAYSISD…EQSMVEQLDK (109 aa). The tract at residues 163–261 is interaction with CDKN1A; the sequence is MVEQLDKLLN…NAEEEFFYEK (99 aa). A Phosphoserine modification is found at Ser-283.

The protein belongs to the BCP1 family. As to quaternary structure, interacts with BRCA2, CDKN1A and MTDH/LYRIC. Interacts with DCTN1/p150-glued and ACTR1A/ARP1. Interacts with alpha-, beta- and gamma-tubulins. Interacts with TENT5C; the interaction has no effect on TENT5C poly(A) polymerase function. As to expression, expressed in the testes (at protein level).

The protein resides in the nucleus. Its subcellular location is the cytoplasm. It localises to the cytoskeleton. It is found in the microtubule organizing center. The protein localises to the centrosome. The protein resides in the centriole. Its subcellular location is the spindle pole. In terms of biological role, during interphase, required for microtubule organizing and anchoring activities. During mitosis, required for the organization and stabilization of the spindle pole. May promote cell cycle arrest by enhancing the inhibition of CDK2 activity by CDKN1A. May be required for repair of DNA damage by homologous recombination in conjunction with BRCA2. May not be involved in non-homologous end joining (NHEJ). The polypeptide is BRCA2 and CDKN1A-interacting protein (Bccip) (Mus musculus (Mouse)).